A 279-amino-acid chain; its full sequence is MMQWSAILIRTCFSGSGGEALTCATSEQQTRPELCFFFSVRSSWPSTISDGACLALVSAEQGATAGRNTLSLRSMMATEDMATSTRSLRSQATNVDDDANVSIENRGMNPSVLTKLGEFASTLTAGNTANKLWLMADVDPKSAFKLLGLDMPGVRFIDNPKMLQWLKFTKAYLDMKKSGFGETSAHALLYEKIGGPDLSLLLLSLKDAPDANSLVQKLTNSQFGMWHDARIEPEQLAQTVFKIQDVRKLPKNDPKLQVIDDYAKYHRKHRKFLNSIMII.

A signal peptide spans 1-20; sequence MMQWSAILIRTCFSGSGGEA. The RxLR-dEER motif lies at 86-106; the sequence is RSLRSQATNVDDDANVSIENR. N-linked (GlcNAc...) asparagine glycosylation occurs at Asn-100. The segment at 129 to 147 is W1 motif; the sequence is ANKLWLMADVDPKSAFKLL. Residues 153-174 form a Y1 motif region; it reads GVRFIDNPKMLQWLKFTKAYLD. The tract at residues 178 to 208 is l motif; it reads SGFGETSAHALLYEKIGGPDLSLLLLSLKDA. The tract at residues 222 to 240 is W2 motif; it reads QFGMWHDARIEPEQLAQTV. Positions 250–271 are Y2 motif; it reads PKNDPKLQVIDDYAKYHRKHRK.

Belongs to the RxLR effector family.

It is found in the secreted. The protein localises to the host cell. Its function is as follows. Effector that suppresses the host mitogen-activated protein kinase (MAPK)-based plant defense activated by the Phytophthora elicitor to promote colonization of the Phytophthora pathogen. Neither directly inhibits MAPK kinase activity nor interacts with MAPK proteins but acts downstream by suppressing transcriptional activation of resistance marker genes such as FRK1, WRKY22 and WRKY29. Confers avirulence in the presence of resistance protein Rps1k in host. The polypeptide is RxLR effector protein Avh331 (Phytophthora sojae (strain P6497) (Soybean stem and root rot agent)).